The sequence spans 305 residues: UDP-3-O-acyl-N-acetylglucosamine deacetylase (305 aa).

Positions 79, 238, and 242 each coordinate Zn(2+). His265 serves as the catalytic Proton donor.

It belongs to the LpxC family. Zn(2+) is required as a cofactor.

It catalyses the reaction a UDP-3-O-[(3R)-3-hydroxyacyl]-N-acetyl-alpha-D-glucosamine + H2O = a UDP-3-O-[(3R)-3-hydroxyacyl]-alpha-D-glucosamine + acetate. Its pathway is glycolipid biosynthesis; lipid IV(A) biosynthesis; lipid IV(A) from (3R)-3-hydroxytetradecanoyl-[acyl-carrier-protein] and UDP-N-acetyl-alpha-D-glucosamine: step 2/6. Catalyzes the hydrolysis of UDP-3-O-myristoyl-N-acetylglucosamine to form UDP-3-O-myristoylglucosamine and acetate, the committed step in lipid A biosynthesis. The sequence is that of UDP-3-O-acyl-N-acetylglucosamine deacetylase from Vibrio atlanticus (strain LGP32) (Vibrio splendidus (strain Mel32)).